The chain runs to 53 residues: Unknown protein from 2D-PAGE of needles (53 aa).

The sequence is that of Unknown protein from 2D-PAGE of needles from Pinus pinaster (Maritime pine).